We begin with the raw amino-acid sequence, 194 residues long: Small ribosomal subunit protein uS7 (194 aa).

This sequence belongs to the universal ribosomal protein uS7 family. As to quaternary structure, part of the 30S ribosomal subunit.

One of the primary rRNA binding proteins, it binds directly to 16S rRNA where it nucleates assembly of the head domain of the 30S subunit. Is located at the subunit interface close to the decoding center. The chain is Small ribosomal subunit protein uS7 from Sulfurisphaera tokodaii (strain DSM 16993 / JCM 10545 / NBRC 100140 / 7) (Sulfolobus tokodaii).